The primary structure comprises 152 residues: Diamine acetyltransferase (152 aa).

The N-acetyltransferase domain maps to 5–152; it reads FEVRKATIDD…SFLDLTPKSD (148 aa). Tyr127 acts as the Proton donor in catalysis.

Belongs to the acetyltransferase family. In terms of assembly, homotetramer.

The protein resides in the cytoplasm. It catalyses the reaction an alkane-alpha,omega-diamine + acetyl-CoA = an N-acetylalkane-alpha,omega-diamine + CoA + H(+). It participates in amine and polyamine degradation; putrescine degradation; N-acetylputrescine from putrescine: step 1/1. In terms of biological role, enzyme which catalyzes the acetylation of polyamines. Displays higher substrate specificity for spermine than for spermidine. May function to acetylate host-derived polyamines, thus alleviating the necessity for de novo synthesis of these molecules. This Cryptosporidium parvum (strain Iowa II) protein is Diamine acetyltransferase.